Consider the following 369-residue polypeptide: Probable L-tyrosine/L-aspartate decarboxylase (369 aa).

Position 224 is an N6-(pyridoxal phosphate)lysine (Lys-224).

This sequence belongs to the group II decarboxylase family. MfnA subfamily. The cofactor is pyridoxal 5'-phosphate.

The catalysed reaction is L-tyrosine + H(+) = tyramine + CO2. It catalyses the reaction L-aspartate + H(+) = beta-alanine + CO2. It participates in cofactor biosynthesis; methanofuran biosynthesis. Its pathway is cofactor biosynthesis; coenzyme A biosynthesis. Functionally, catalyzes the decarboxylation of L-tyrosine to produce tyramine for methanofuran biosynthesis. Can also catalyze the decarboxylation of L-aspartate to produce beta-alanine for coenzyme A (CoA) biosynthesis. The polypeptide is Probable L-tyrosine/L-aspartate decarboxylase (Methanospirillum hungatei JF-1 (strain ATCC 27890 / DSM 864 / NBRC 100397 / JF-1)).